We begin with the raw amino-acid sequence, 452 residues long: UPF0210 protein Csac_1314 (452 aa).

Belongs to the UPF0210 family. As to quaternary structure, homodimer.

In Caldicellulosiruptor saccharolyticus (strain ATCC 43494 / DSM 8903 / Tp8T 6331), this protein is UPF0210 protein Csac_1314.